We begin with the raw amino-acid sequence, 805 residues long: Sucrose synthase (805 aa).

The GT-B glycosyltransferase stretch occupies residues 275–752 (MVFNVVILSP…GLKRIQEKYT (478 aa)).

The protein belongs to the glycosyltransferase 1 family. Plant sucrose synthase subfamily.

It catalyses the reaction an NDP-alpha-D-glucose + D-fructose = a ribonucleoside 5'-diphosphate + sucrose + H(+). Sucrose-cleaving enzyme that provides UDP-glucose and fructose for various metabolic pathways. This chain is Sucrose synthase, found in Solanum tuberosum (Potato).